The primary structure comprises 120 residues: NAD(P)H-quinone oxidoreductase subunit 3, chloroplastic (120 aa).

The next 3 membrane-spanning stretches (helical) occupy residues 9–29 (IFWA…LISG), 64–84 (MFAL…PWAM), and 88–108 (VLGV…IIGS).

This sequence belongs to the complex I subunit 3 family. As to quaternary structure, NDH is composed of at least 16 different subunits, 5 of which are encoded in the nucleus.

It is found in the plastid. The protein localises to the chloroplast thylakoid membrane. The enzyme catalyses a plastoquinone + NADH + (n+1) H(+)(in) = a plastoquinol + NAD(+) + n H(+)(out). It carries out the reaction a plastoquinone + NADPH + (n+1) H(+)(in) = a plastoquinol + NADP(+) + n H(+)(out). Functionally, NDH shuttles electrons from NAD(P)H:plastoquinone, via FMN and iron-sulfur (Fe-S) centers, to quinones in the photosynthetic chain and possibly in a chloroplast respiratory chain. The immediate electron acceptor for the enzyme in this species is believed to be plastoquinone. Couples the redox reaction to proton translocation, and thus conserves the redox energy in a proton gradient. This is NAD(P)H-quinone oxidoreductase subunit 3, chloroplastic from Drimys granadensis.